The chain runs to 169 residues: NADH-quinone oxidoreductase subunit B (169 aa).

Residues Cys-42, Cys-43, Cys-107, and Cys-136 each contribute to the [4Fe-4S] cluster site.

Belongs to the complex I 20 kDa subunit family. As to quaternary structure, NDH-1 is composed of 14 different subunits. Subunits NuoB, C, D, E, F, and G constitute the peripheral sector of the complex. [4Fe-4S] cluster is required as a cofactor.

Its subcellular location is the cell inner membrane. The enzyme catalyses a quinone + NADH + 5 H(+)(in) = a quinol + NAD(+) + 4 H(+)(out). NDH-1 shuttles electrons from NADH, via FMN and iron-sulfur (Fe-S) centers, to quinones in the respiratory chain. The immediate electron acceptor for the enzyme in this species is believed to be ubiquinone. Couples the redox reaction to proton translocation (for every two electrons transferred, four hydrogen ions are translocated across the cytoplasmic membrane), and thus conserves the redox energy in a proton gradient. In Wolinella succinogenes (strain ATCC 29543 / DSM 1740 / CCUG 13145 / JCM 31913 / LMG 7466 / NCTC 11488 / FDC 602W) (Vibrio succinogenes), this protein is NADH-quinone oxidoreductase subunit B.